Here is a 109-residue protein sequence, read N- to C-terminus: ATP-dependent Clp protease adapter protein ClpS (109 aa).

The tract at residues 1–21 is disordered; sequence MAERKQGGQNNGAGSSVITEV.

It belongs to the ClpS family. In terms of assembly, binds to the N-terminal domain of the chaperone ClpA.

Involved in the modulation of the specificity of the ClpAP-mediated ATP-dependent protein degradation. The chain is ATP-dependent Clp protease adapter protein ClpS from Caulobacter sp. (strain K31).